The following is a 355-amino-acid chain: Alanine racemase (355 aa).

K34 functions as the Proton acceptor; specific for D-alanine in the catalytic mechanism. K34 carries the post-translational modification N6-(pyridoxal phosphate)lysine. Residue R133 participates in substrate binding. Y249 acts as the Proton acceptor; specific for L-alanine in catalysis. A substrate-binding site is contributed by M297.

This sequence belongs to the alanine racemase family. The cofactor is pyridoxal 5'-phosphate.

The enzyme catalyses L-alanine = D-alanine. It participates in amino-acid biosynthesis; D-alanine biosynthesis; D-alanine from L-alanine: step 1/1. Its function is as follows. Catalyzes the interconversion of L-alanine and D-alanine. May also act on other amino acids. The chain is Alanine racemase (alr) from Rickettsia peacockii (strain Rustic).